The following is a 350-amino-acid chain: Probable flap endonuclease 1 homolog (350 aa).

Positions 1–95 are N-domain; the sequence is MGITKLAHLI…AVLEKRAQST (95 aa). Asp34 serves as a coordination point for Mg(2+). Arg61 contributes to the DNA binding site. Asp77, Glu130, Glu132, Asp151, and Asp153 together coordinate Mg(2+). Residues 110–223 are I-domain; sequence NQECLRLLHL…SRALKLIKEH (114 aa). Glu130 contacts DNA. Positions 201 and 203 each coordinate DNA. Asp203 serves as a coordination point for Mg(2+). The segment at 317 to 325 is interaction with PCNA; it reads RQSRLEDFF.

The protein belongs to the XPG/RAD2 endonuclease family. FEN1 subfamily. In terms of assembly, interacts with PCNA. Three molecules of fen1 bind to one PCNA trimer with each molecule binding to one PCNA monomer. PCNA stimulates the nuclease activity without altering cleavage specificity. It depends on Mg(2+) as a cofactor. In terms of processing, phosphorylated. Phosphorylation upon DNA damage induces relocalization to the nuclear plasma.

The protein resides in the nucleus. Its subcellular location is the nucleolus. It localises to the nucleoplasm. It is found in the mitochondrion. Structure-specific nuclease with 5'-flap endonuclease and 5'-3' exonuclease activities involved in DNA replication and repair. During DNA replication, cleaves the 5'-overhanging flap structure that is generated by displacement synthesis when DNA polymerase encounters the 5'-end of a downstream Okazaki fragment. It enters the flap from the 5'-end and then tracks to cleave the flap base, leaving a nick for ligation. Also involved in the long patch base excision repair (LP-BER) pathway, by cleaving within the apurinic/apyrimidinic (AP) site-terminated flap. Acts as a genome stabilization factor that prevents flaps from equilibrating into structures that lead to duplications and deletions. Also possesses 5'-3' exonuclease activity on nicked or gapped double-stranded DNA, and exhibits RNase H activity. Also involved in replication and repair of rDNA and in repairing mitochondrial DNA. The protein is Probable flap endonuclease 1 homolog of Danio rerio (Zebrafish).